We begin with the raw amino-acid sequence, 322 residues long: Olfactory receptor 11L1 (322 aa).

At 1-25 the chain is on the extracellular side; it reads MEPQNTSTVTNFQLLGFQNLLEWQA. The N-linked (GlcNAc...) asparagine glycan is linked to Asn5. The chain crosses the membrane as a helical span at residues 26–46; it reads LLFVIFLLIYCLTIIGNVVII. The Cytoplasmic portion of the chain corresponds to 47–54; the sequence is TVVSQGLR. The helical transmembrane segment at 55-75 threads the bilayer; that stretch reads LHSPMYMFLQHLSFLEVWYTS. Residues 76–99 lie on the Extracellular side of the membrane; it reads TTVPLLLANLLSWGQAISFSACMA. Cys97 and Cys189 form a disulfide bridge. Residues 100–120 traverse the membrane as a helical segment; it reads QLYFFVFLGATECFLLAFMAY. Residues 121 to 139 are Cytoplasmic-facing; sequence DRYLAICSPLRYPFLMHRG. The helical transmembrane segment at 140–160 threads the bilayer; that stretch reads LCARLVVVSWCTGVSTGFLPS. The Extracellular portion of the chain corresponds to 161–197; the sequence is LMISRLDFCGRNQINHFFCDLPPLMQLSCSRVYITEV. Residues 198–217 form a helical membrane-spanning segment; it reads TIFILSIAVLCICFFLTLGP. Residues 218–237 are Cytoplasmic-facing; it reads YVFIVSSILRIPSTSGRRKT. A helical transmembrane segment spans residues 238 to 258; that stretch reads FSTCGSHLAVVTLYYGTMISM. The Extracellular segment spans residues 259-271; sequence YVCPSPHLLPEIN. A helical membrane pass occupies residues 272-292; the sequence is KIISVFYTVVTPLLNPVIYSL. The Cytoplasmic portion of the chain corresponds to 293–322; that stretch reads RNKDFKEAVRKVMRRKCGILWSTSKRKFLY.

This sequence belongs to the G-protein coupled receptor 1 family.

The protein localises to the cell membrane. Its function is as follows. Odorant receptor. This Homo sapiens (Human) protein is Olfactory receptor 11L1 (OR11L1).